We begin with the raw amino-acid sequence, 322 residues long: tRNA dimethylallyltransferase (322 aa).

Residue 19–26 (GPTASGKT) coordinates ATP. 21–26 (TASGKT) contributes to the substrate binding site. 3 interaction with substrate tRNA regions span residues 44-47 (DSAL), 168-172 (QRIQR), and 255-260 (RCVGYR).

It belongs to the IPP transferase family. As to quaternary structure, monomer. It depends on Mg(2+) as a cofactor.

It catalyses the reaction adenosine(37) in tRNA + dimethylallyl diphosphate = N(6)-dimethylallyladenosine(37) in tRNA + diphosphate. Functionally, catalyzes the transfer of a dimethylallyl group onto the adenine at position 37 in tRNAs that read codons beginning with uridine, leading to the formation of N6-(dimethylallyl)adenosine (i(6)A). In Cupriavidus taiwanensis (strain DSM 17343 / BCRC 17206 / CCUG 44338 / CIP 107171 / LMG 19424 / R1) (Ralstonia taiwanensis (strain LMG 19424)), this protein is tRNA dimethylallyltransferase.